A 320-amino-acid chain; its full sequence is ATP-dependent 6-phosphofructokinase (320 aa).

Gly-11 lines the ATP pocket. 21 to 25 (RAIAR) is an ADP binding site. ATP-binding positions include 72–73 (RF) and 102–105 (GDGS). Asp-103 is a Mg(2+) binding site. Residues 125-127 (TID), Arg-162, and 169-171 (MGR) each bind substrate. Asp-127 acts as the Proton acceptor in catalysis. ADP contacts are provided by residues 185 to 187 (GAD) and 213 to 215 (KDH). Residues Glu-222, Arg-243, and 249–252 (HIQR) each bind substrate.

The protein belongs to the phosphofructokinase type A (PFKA) family. ATP-dependent PFK group I subfamily. Prokaryotic clade 'B1' sub-subfamily. In terms of assembly, homotetramer. It depends on Mg(2+) as a cofactor.

It localises to the cytoplasm. The catalysed reaction is beta-D-fructose 6-phosphate + ATP = beta-D-fructose 1,6-bisphosphate + ADP + H(+). It participates in carbohydrate degradation; glycolysis; D-glyceraldehyde 3-phosphate and glycerone phosphate from D-glucose: step 3/4. With respect to regulation, allosterically activated by ADP and other diphosphonucleosides, and allosterically inhibited by phosphoenolpyruvate. In terms of biological role, catalyzes the phosphorylation of D-fructose 6-phosphate to fructose 1,6-bisphosphate by ATP, the first committing step of glycolysis. The protein is ATP-dependent 6-phosphofructokinase of Ligilactobacillus salivarius (strain UCC118) (Lactobacillus salivarius).